Reading from the N-terminus, the 103-residue chain is Trp operon repressor homolog (103 aa).

Residues 59 to 82 mediate DNA binding; sequence QRQISQMLGVGIATITRGSNELKS.

This sequence belongs to the TrpR family. In terms of assembly, homodimer.

It is found in the cytoplasm. This protein is an aporepressor. When complexed with L-tryptophan it binds the operator region of the trp operon and prevents the initiation of transcription. The polypeptide is Trp operon repressor homolog (Vibrio parahaemolyticus serotype O3:K6 (strain RIMD 2210633)).